The primary structure comprises 105 residues: Neuropeptide-like protein 32 (105 aa).

The signal sequence occupies residues 1 to 22; that stretch reads MRQFNLLLVFCLIALTALPVFS. Residues 23 to 54 constitute a propeptide that is removed on maturation; sequence FPNGLTMDSIDMEPMGAFDENGAADESPRVKR. Gly-59 is subject to Glycine amide. Trp-64 bears the Tryptophan amide mark. A glycine amide mark is found at Gly-68, Gly-73, and Gly-80. At Trp-86 the chain carries Tryptophan amide. Glycine amide is present on residues Gly-91 and Gly-98. A Tryptophan amide modification is found at Trp-103.

The protein belongs to the YARP (YGGW-amide related peptide) family.

It is found in the secreted. Functionally, may have antimicrobial activity. This chain is Neuropeptide-like protein 32 (nlp-32), found in Caenorhabditis elegans.